We begin with the raw amino-acid sequence, 61 residues long: MECYRMSNIVTCQPWEKFCYKEVTMFFPNHPVHLSGCASECTETNSKFCCTTDKCNGAGSG.

4 disulfides stabilise this stretch: cysteine 3–cysteine 19, cysteine 12–cysteine 37, cysteine 41–cysteine 49, and cysteine 50–cysteine 55.

Belongs to the three-finger toxin family. Short-chain subfamily. Expressed by the venom gland.

Its subcellular location is the secreted. Functionally, shows no cytotoxicity and does not inhibit the binding of alpha-bungarotoxin to nicotinic acetylcholine receptors of muscle and alpha-7/CHRNA7 types. However, it potentiates the binding of alpha-bungarotoxin to the acetylcholine-binding protein from Lymnaea stagnalis. The polypeptide is Nakoroxin (Naja kaouthia (Monocled cobra)).